The primary structure comprises 369 residues: Phosphoribosyl pyrophosphate synthase-associated protein 2 (369 aa).

Residue Met1 is modified to N-acetylmethionine. Residues Ser219, Ser227, and Ser233 each carry the phosphoserine modification.

This sequence belongs to the ribose-phosphate pyrophosphokinase family. Binds to PRPS1 and PRPS2.

Functionally, seems to play a negative regulatory role in 5-phosphoribose 1-diphosphate synthesis. This Bos taurus (Bovine) protein is Phosphoribosyl pyrophosphate synthase-associated protein 2 (PRPSAP2).